A 46-amino-acid chain; its full sequence is Elongation factor Tu (46 aa).

Basic and acidic residues predominate over residues 1-10 (MAKGKFERSK). The tract at residues 1–20 (MAKGKFERSKPHVNVGTIGH) is disordered. 19 to 26 (GHVDHGKT) contributes to the GTP binding site.

This sequence belongs to the GTP-binding elongation factor family. EF-Tu/EF-1A subfamily. Monomer.

The protein localises to the cytoplasm. Its function is as follows. This protein promotes the GTP-dependent binding of aminoacyl-tRNA to the A-site of ribosomes during protein biosynthesis. The chain is Elongation factor Tu (tufA) from Eikenella corrodens.